Consider the following 1484-residue polypeptide: Chromatin remodeling regulator CECR2 (1484 aa).

The interval 170 to 241 is disordered; sequence VQGKSNGELS…RHGSQGPGQG (72 aa). Positions 197–209 are enriched in basic residues; it reads TGKRRGRPPKRKK. The span at 210–222 shows a compositional bias: basic and acidic residues; that stretch reads LQEEILLSEKQEE. The segment covering 223 to 234 has biased composition (polar residues); it reads NSLASEPQTRHG. Serine 422 is subject to Phosphoserine. Residues 434-538 enclose the Bromo domain; the sequence is FELDDDFTAM…RCFHRAMMKH (105 aa). Residue threonine 546 is modified to Phosphothreonine. 6 disordered regions span residues 556–704, 796–825, 919–1053, 1165–1259, 1287–1320, and 1442–1484; these read EKRE…GPRL, GNHGATNQGPLGPDEKPHLGPGPSHQPRTL, GVPY…SYPG, VMGG…LFSD, AKVPNDGQNPGPEEEKLDESMERPESPKEFLDLD, and YRPS…LDQS. Serine 571 carries the post-translational modification Phosphoserine. Residues 605-614 show a composition bias toward low complexity; the sequence is SSGDDQSSSS. Serine 1014 is modified (phosphoserine). Asymmetric dimethylarginine is present on residues arginine 1197 and arginine 1203. Residues 1243–1254 are compositionally biased toward pro residues; sequence SGPPASQPPPPR. Basic and acidic residues predominate over residues 1304-1320; sequence DESMERPESPKEFLDLD. At serine 1312 the chain carries Phosphoserine. The segment covering 1451-1469 has biased composition (polar residues); sequence PVQSQASFPKTPTAATSQE. A compositionally biased stretch (pro residues) spans 1474 to 1484; sequence HKPPTLPLDQS.

Component of the CERF-1 ISWI chromatin remodeling complex (also called the CECR2-containing remodeling factor (CERF) complex) at least composed of CECR2 and SMARCA1. Component of the CERF-5 ISWI chromatin remodeling complex at least composed of SMARCA5/SNF2H and CECR2. LUZP1 is detected as part of the CERF-1 and CERF-5 complexes in embryonic stem (ES) cells where it is involved in complex stabilization but is not detected in the complexes in the testis. Interacts with CCAR2; CCAR2 may form part of the CERF-1 and/or CEF-5 ISWI chromatin remodeling complexes in ES cells. Interacts with acetylated lysine residues on histone H2A and H3 (in vitro). Interacts with LRPPRC. Highly expressed in skeletal muscle, thymus, placenta and lung. Expressed at lower level in brain, heart, colon, spleen, kidney.

The protein localises to the nucleus. In terms of biological role, regulatory subunit of the ATP-dependent CERF-1 and CERF-5 ISWI chromatin remodeling complexes, which form ordered nucleosome arrays on chromatin and facilitate access to DNA during DNA-templated processes such as DNA replication, transcription, and repair. The complexes do not have the ability to slide mononucleosomes to the center of a DNA template. The CERF-1 ISWI chromatin remodeling complex has a lower ATP hydrolysis rate than the CERF-5 ISWI chromatin remodeling complex. Plays a role in various processes during development: required during embryogenesis for neural tube closure and inner ear development. In adults, required for spermatogenesis, via the formation of ISWI-type chromatin complexes. In histone-modifying complexes, CECR2 recognizes and binds acylated histones: binds histones that are acetylated and/or butyrylated. May also be involved through its interaction with LRPPRC in the integration of cytoskeletal network with vesicular trafficking, nucleocytosolic shuttling, transcription, chromosome remodeling and cytokinesis. The polypeptide is Chromatin remodeling regulator CECR2 (CECR2) (Homo sapiens (Human)).